A 335-amino-acid polypeptide reads, in one-letter code: uncharacterized protein (335 aa).

2 disordered regions span residues 152 to 179 and 252 to 271; these read IQLP…TVND and LDLF…SASL. Residues Ser257 and Ser260 each carry the phosphoserine modification. Positions 257 to 271 are enriched in polar residues; the sequence is SPSSENKSTAGSASL.

This is an uncharacterized protein from Schizosaccharomyces pombe (strain 972 / ATCC 24843) (Fission yeast).